Here is a 1005-residue protein sequence, read N- to C-terminus: Protein TIC 214 (1005 aa).

6 helical membrane passes run 25–45 (VGLY…LFLL), 67–87 (FFTG…HLAL), 91–111 (HTIL…SNSG), 131–151 (SFQL…SVLG), 177–197 (FVGW…VFVW), and 304–324 (LFSI…PLLY). Disordered regions lie at residues 457–481 (VEEG…EREE) and 767–833 (KKKK…KRKQ). The segment covering 783–810 (KQKKVKSKQKKVKSKQKKVKSKQKKVKS) has biased composition (basic residues). Residues 811 to 824 (KQNEIKSKQNEIKS) show a composition bias toward basic and acidic residues.

Belongs to the TIC214 family. In terms of assembly, part of the Tic complex.

Its subcellular location is the plastid. The protein localises to the chloroplast inner membrane. In terms of biological role, involved in protein precursor import into chloroplasts. May be part of an intermediate translocation complex acting as a protein-conducting channel at the inner envelope. The protein is Protein TIC 214 of Oenothera berteroana (Bertero's evening primrose).